A 210-amino-acid polypeptide reads, in one-letter code: Phosphate propanoyltransferase (210 aa).

26-28 contributes to the CoA binding site; the sequence is ISN. Residues histidine 30 and histidine 32 each contribute to the Zn(2+) site. CoA-binding residues include lysine 71 and arginine 78. Arginine 84 contacts phosphate. Zn(2+) is bound by residues glutamate 90, histidine 138, histidine 140, and histidine 186. Asparagine 193 contacts CoA.

This sequence belongs to the PduL family. The cofactor is Zn(2+).

It localises to the bacterial microcompartment. The enzyme catalyses propanoyl-CoA + phosphate = propanoyl phosphate + CoA. The protein operates within polyol metabolism; 1,2-propanediol degradation. Involved in 1,2-propanediol (1,2-PD) utilization within the bacterial microcompartment (BMC) dedicated to 1,2-PD degradation by catalyzing the conversion of propanoyl-CoA to propanoyl-phosphate. Required for optimal growth on 1,2-PD. CoA is regenerated within the BMC (for use by PduP) via this enzyme, although there must also be cofactor transport across the BMC. Directly targeted to the BMC. In terms of biological role, expression of a cosmid containing the full 21-gene pdu operon in E.coli allows E.coli to grow on 1,2-propanediol (1,2-PD) with the appearance of bacterial microcompartments (BMC) in its cytoplasm. Functionally, the 1,2-PD-specific bacterial microcompartment (BMC) concentrates low levels of 1,2-PD catabolic enzymes, concentrates volatile reaction intermediates thus enhancing pathway flux and keeps the level of toxic, mutagenic propionaldehyde low. The polypeptide is Phosphate propanoyltransferase (Citrobacter freundii).